The primary structure comprises 402 residues: RNA-binding protein 42 (402 aa).

A disordered region spans residues 240 to 275; the sequence is ETASDDSVIGPSMPEPEPVHVEPVDTSTEDKKKGKQ. Residues 256 to 275 are compositionally biased toward basic and acidic residues; that stretch reads EPVHVEPVDTSTEDKKKGKQ. Positions 303–381 constitute an RRM domain; it reads FRIFCGDLGN…RPIKLRKSAW (79 aa).

Belongs to the RRM RBM42 family.

The protein resides in the nucleus. It localises to the cytoplasm. Functionally, may bind RNA. The protein is RNA-binding protein 42 (rbm42) of Danio rerio (Zebrafish).